Reading from the N-terminus, the 389-residue chain is tRNA-specific 2-thiouridylase MnmA (389 aa).

ATP contacts are provided by residues 35-42 (GMSGGVDS) and Met61. The tract at residues 121-123 (NPD) is interaction with target base in tRNA. Catalysis depends on Cys126, which acts as the Nucleophile. A disulfide bond links Cys126 and Cys223. Residue Gly151 participates in ATP binding. Residues 173-175 (KDQ) are interaction with tRNA. Cys223 acts as the Cysteine persulfide intermediate in catalysis. An interaction with tRNA region spans residues 335-336 (RY).

The protein belongs to the MnmA/TRMU family.

Its subcellular location is the cytoplasm. It carries out the reaction S-sulfanyl-L-cysteinyl-[protein] + uridine(34) in tRNA + AH2 + ATP = 2-thiouridine(34) in tRNA + L-cysteinyl-[protein] + A + AMP + diphosphate + H(+). Its function is as follows. Catalyzes the 2-thiolation of uridine at the wobble position (U34) of tRNA, leading to the formation of s(2)U34. The chain is tRNA-specific 2-thiouridylase MnmA from Actinobacillus pleuropneumoniae serotype 3 (strain JL03).